The chain runs to 374 residues: MGELVDNLPEEVLALIFRDLPLRDLAVATRVCRAWAAAAANSTVWSDKSISCDCELEDLLPPYLSSCLDHIHNLRLEYEPSKKPSRGTATELLTALASRAPRLRGLRLECRGEKPLFDAGQDILGAVHAVCGAAHQLRHLDLRHLPYTLDDTLVLKAAAGCPELRSLFLDNHALVNSVQPTSVLKLLEACPHLRALGLHLASMSRAALELLAAPHRSPFALLALRCACPEDARASPLPDEAWATLSCRHPGLEVELELEPVLPDEAVTRILQPAVPVAVLRLNLSGDTVGPVRFATRHYAETLRALEVRASASPELHTALEELAARCAGLREIHCFCVVRPSVLDAFRAHCPRLRSYTLKLKREPHPWRPTLVR.

The F-box domain maps to G2–K48.

Directly interacts with SKP1 and CUL1. Widely expressed during embryogenesis and in adult tissues.

Substrate-recognition component of the SCF (SKP1-CUL1-F-box protein)-type E3 ubiquitin ligase complex. This Mus musculus (Mouse) protein is F-box/LRR-repeat protein 8 (Fbxl8).